Consider the following 556-residue polypeptide: U-box domain-containing protein 38 (556 aa).

Positions 1–34 (MGKNGRLRWNPFSHRSSSSTSSSSRQQQQEQQPP) are disordered. Low complexity predominate over residues 13 to 32 (SHRSSSSTSSSSRQQQQEQQ). In terms of domain architecture, U-box spans 32–108 (QPPVEFLCPI…DTWCDTVGVS (77 aa)). ARM repeat units follow at residues 256–295 (DEAR…NLSL), 297–336 (KKNK…SLSL), 338–378 (DDNK…HLTL), 380–417 (QTNR…NLAC), and 418–468 (CSEG…ALSH).

In terms of assembly, binds to SD16, SD17, SD18 and SD129.

It carries out the reaction S-ubiquitinyl-[E2 ubiquitin-conjugating enzyme]-L-cysteine + [acceptor protein]-L-lysine = [E2 ubiquitin-conjugating enzyme]-L-cysteine + N(6)-ubiquitinyl-[acceptor protein]-L-lysine.. The protein operates within protein modification; protein ubiquitination. Its function is as follows. Functions as an E3 ubiquitin ligase. The protein is U-box domain-containing protein 38 (PUB38) of Arabidopsis thaliana (Mouse-ear cress).